Consider the following 164-residue polypeptide: FMN reductase (NADH) RutF (164 aa).

Belongs to the non-flavoprotein flavin reductase family. RutF subfamily.

The catalysed reaction is FMNH2 + NAD(+) = FMN + NADH + 2 H(+). Functionally, catalyzes the reduction of FMN to FMNH2 which is used to reduce pyrimidine by RutA via the Rut pathway. In Escherichia coli O150:H5 (strain SE15), this protein is FMN reductase (NADH) RutF.